The chain runs to 399 residues: Acetate kinase (399 aa).

Position 8 (Asn-8) interacts with Mg(2+). Residue Lys-15 participates in ATP binding. Arg-89 contributes to the substrate binding site. Asp-146 functions as the Proton donor/acceptor in the catalytic mechanism. Residues 206 to 210 (HVGNG), 283 to 285 (DMR), and 331 to 335 (GMGEN) each bind ATP. Glu-383 contributes to the Mg(2+) binding site.

This sequence belongs to the acetokinase family. As to quaternary structure, homodimer. The cofactor is Mg(2+). Mn(2+) serves as cofactor.

The protein localises to the cytoplasm. It catalyses the reaction acetate + ATP = acetyl phosphate + ADP. It participates in metabolic intermediate biosynthesis; acetyl-CoA biosynthesis; acetyl-CoA from acetate: step 1/2. Catalyzes the formation of acetyl phosphate from acetate and ATP. Can also catalyze the reverse reaction. The protein is Acetate kinase of Streptococcus equi subsp. zooepidemicus (strain H70).